Reading from the N-terminus, the 660-residue chain is T-box protein H15 (660 aa).

Residues 1-11 (MLLSNQPANTK) show a composition bias toward polar residues. Disordered regions lie at residues 1–72 (MLLS…NHNQ), 90–122 (GGNA…DDVD), and 169–266 (QQQQ…PKIV). Residues 12–22 (PQQTPSPSQTQ) show a composition bias toward low complexity. The span at 23-33 (NFKSKLQQQIV) shows a compositional bias: polar residues. Residues 35–47 (AAAAAAANIANGS) show a composition bias toward low complexity. Positions 48–71 (SHHHHHQNHHHHHPLNNHHNHNHN) are enriched in basic residues. 2 stretches are compositionally biased toward low complexity: residues 93–108 (APSS…SPAS) and 169–179 (QQQQQQQQQRQ). Basic residues predominate over residues 180-198 (QTHHHATTGKQQRQHHNHH). Residues 199–233 (SSNTNNSSNSGNSNTNSKSSSQRGRSAAAVGAAAT) show a composition bias toward low complexity. The span at 234–243 (PSPPPPPPSQ) shows a compositional bias: pro residues. The segment at residues 286-472 (LWDKFHELGT…SNPFAKGFRD (187 aa)) is a DNA-binding region (T-box). Residues 598–660 (NRTPPPSMAV…PPASNRAESP (63 aa)) form a disordered region. A compositionally biased stretch (pro residues) spans 600 to 613 (TPPPSMAVAPPAPA). Residues 614-624 (TPTSSCGSASP) show a composition bias toward low complexity. Polar residues predominate over residues 643 to 660 (QVPQHQASPPASNRAESP).

The protein resides in the nucleus. The polypeptide is T-box protein H15 (H15) (Drosophila melanogaster (Fruit fly)).